Reading from the N-terminus, the 261-residue chain is Syntaxin-7 (261 aa).

Residue Ser-2 is modified to N-acetylserine. Residues 2–238 (SYTPGIGGDP…NYQRKSRKTL (237 aa)) lie on the Cytoplasmic side of the membrane. Position 4 is a phosphothreonine (Thr-4). Positions 47-68 (ELRQQLQQEQQYTNQLAKETDK) form a coiled coil. A Phosphothreonine modification is found at Thr-79. Phosphoserine occurs at positions 125, 126, 129, and 205. Residues 128 to 148 (VSGGFPEDSSKEKNFVSWESQ) form a disordered region. One can recognise a t-SNARE coiled-coil homology domain in the interval 165-227 (LRLIHERESS…QQANQQLSRA (63 aa)). A helical; Anchor for type IV membrane protein transmembrane segment spans residues 239–259 (CIIILILVVGIVIIFFIVWGL). At 260–261 (KG) the chain is on the vesicular side.

Belongs to the syntaxin family. As to quaternary structure, interacts with VPS11, VPS16 and VPS18. Interacts with VPS33A. Forms a SNARE complex with VTI1B, STX8 and VAMP8 which functions in the homotypic fusion of late endosomes. Component of the SNARE complex composed of STX7, STX8, VAMP7 and VTI1B that is required for heterotypic fusion of late endosomes with lysosomes. Interacts with TPC1. Detected in all tissues tested. Highest expression is found in kidney followed by lung, spleen, heart and brain. Lower expression, in skeletal muscle, liver and testis.

Its subcellular location is the early endosome membrane. In terms of biological role, may be involved in protein trafficking from the plasma membrane to the early endosome (EE) as well as in homotypic fusion of endocytic organelles. Mediates the endocytic trafficking from early endosomes to late endosomes and lysosomes. The sequence is that of Syntaxin-7 (Stx7) from Rattus norvegicus (Rat).